A 523-amino-acid chain; its full sequence is Peptide chain release factor 3 (523 aa).

One can recognise a tr-type G domain in the interval 10–277 (EKRRTFAIIS…SFVDLAPAPE (268 aa)). Residues 19–26 (SHPDAGKT), 87–91 (DTPGH), and 141–144 (NKLD) each bind GTP.

The protein belongs to the TRAFAC class translation factor GTPase superfamily. Classic translation factor GTPase family. PrfC subfamily.

The protein localises to the cytoplasm. Functionally, increases the formation of ribosomal termination complexes and stimulates activities of RF-1 and RF-2. It binds guanine nucleotides and has strong preference for UGA stop codons. It may interact directly with the ribosome. The stimulation of RF-1 and RF-2 is significantly reduced by GTP and GDP, but not by GMP. The protein is Peptide chain release factor 3 of Lactobacillus acidophilus (strain ATCC 700396 / NCK56 / N2 / NCFM).